Consider the following 645-residue polypeptide: E3 ubiquitin-protein ligase ORTHRUS 2 (645 aa).

The segment at 12-63 (DGVCMRCKSNPPPEESLTCGTCVTPWHVSCLSSPPKTLASTLQWHCPDCSGE) adopts a PHD-type zinc-finger fold. The disordered stretch occupies residues 96 to 133 (LSTEEKAKMRQRLLSGKGVEEDDEEEKRKKKGKGKNPN). Residues 146–185 (CSFCMQLPERPVTKPCGHNACLKCFEKWMGQGKRTCGKCR) form an RING-type 1 zinc finger. The region spanning 273 to 422 (VRNQGLLVGE…FKVCRYLFVR (150 aa)) is the YDG domain. Residues 518–575 (CQICQQVLTLPVTTPCAHNFCKACLEAKFAGKTLVRERSTGGRTLRSRKNVLNCPCCP) form an RING-type 2 zinc finger. Positions 583 to 613 (QNPQVNREVAEVIEKLKTQEEDTAELEDEDE) form a coiled coil. Positions 599–645 (KTQEEDTAELEDEDEGECSGTTPEEDSEQPKKRIKLDTDATVSATIR) are disordered. The segment covering 603 to 625 (EDTAELEDEDEGECSGTTPEEDS) has biased composition (acidic residues). The segment covering 626–636 (EQPKKRIKLDT) has biased composition (basic and acidic residues).

Interacts with histones CENH3, HTB2, HTR3 and H4. As to expression, mostly expressed in inflorescence and, to a lower extent, in leaves.

Its subcellular location is the nucleus. It carries out the reaction S-ubiquitinyl-[E2 ubiquitin-conjugating enzyme]-L-cysteine + [acceptor protein]-L-lysine = [E2 ubiquitin-conjugating enzyme]-L-cysteine + N(6)-ubiquitinyl-[acceptor protein]-L-lysine.. The protein operates within protein modification; protein ubiquitination. Functionally, E3 ubiquitin-protein ligase. Participates in CpG methylation-dependent transcriptional regulation and epigenetic transcriptional silencing. Mediates ubiquitination with the E2 ubiquitin-conjugating enzyme UBC11. Promotes methylation-mediated gene silencing leading, for example, to early flowering. Associates with methylated DNA, and can bind to CpG, CpNpG, and CpNpN DNA motifs, with a strong preference for methylated forms, and with highest affinity for CpG substrate. Probably acts at the DNA methylation?histone interface to maintain centromeric heterochromatin. This is E3 ubiquitin-protein ligase ORTHRUS 2 (ORTH2) from Arabidopsis thaliana (Mouse-ear cress).